The chain runs to 1216 residues: FK506-binding protein 15 (1216 aa).

Met1 is subject to N-acetylmethionine. 2 positions are modified to phosphoserine: Ser14 and Ser23. A disordered region spans residues 41–68; it reads YTAPKQPKKGQGTAAGNQTAPKPAPATT. The segment covering 59-68 has biased composition (low complexity); that stretch reads TAPKPAPATT. Positions 71 to 168 are important for function in growth cone organization; sequence SSVLFATAVH…AVSFNKQVCV (98 aa). Lys91 carries the N6-acetyllysine modification. Residues 196 to 289 enclose the PPIase FKBP-type domain; it reads GDSLEVAYTG…VFEVEVRRVK (94 aa). The tract at residues 292–357 is disordered; sequence RDSGSDGHSV…QLTVNSNPDT (66 aa). Positions 303-322 are enriched in low complexity; the sequence is SRDSAAPSPIPASDSLSADP. A phosphoserine mark is found at Ser306, Ser310, Ser342, Ser344, and Ser617. The segment covering 340–356 has biased composition (polar residues); that stretch reads SKSNSLSEQLTVNSNPD. 2 coiled-coil regions span residues 519–790 and 820–865; these read MAVN…AAAE and QQYR…RLEK. Residues 927-1216 form a disordered region; that stretch reads HQEEEEEEEE…DDDDDIGWLG (290 aa). A compositionally biased stretch (acidic residues) spans 929 to 940; sequence EEEEEEEEEEEE. Ser948 is modified (phosphoserine). Positions 954–964 are enriched in pro residues; it reads PATPGMPPAPP. Over residues 983 to 994 the composition is skewed to low complexity; that stretch reads TTPLPLQALPTP. Ser1018 is modified (phosphoserine). The segment covering 1036 to 1045 has biased composition (pro residues); that stretch reads TSIPPKPPGP. Residues Ser1050 and Ser1091 each carry the phosphoserine modification. Thr1093 is subject to Phosphothreonine. Residues Ser1108, Ser1153, Ser1157, Ser1159, and Ser1190 each carry the phosphoserine modification. Thr1198 bears the Phosphothreonine mark. Positions 1202–1216 are enriched in acidic residues; the sequence is GDDDDDDDDDIGWLG.

This sequence belongs to the FKBP-type PPIase family. As to quaternary structure, interacts with WIP and actin. Interacts with TBC1D23. As to expression, expressed in brain, with highest levels in the granular cell layer of cerebellum and in the granule cell layer of dentate gyrus.

Its subcellular location is the cytoplasm. It is found in the cell projection. The protein localises to the axon. It localises to the early endosome. Its function is as follows. Involved in the transport of early endosomes at the level of transition between microfilament-based and microtubule-based movement. May be involved in the cytoskeletal organization of neuronal growth cones. Seems to be inactive as a PPIase. The polypeptide is FK506-binding protein 15 (Fkbp15) (Mus musculus (Mouse)).